We begin with the raw amino-acid sequence, 308 residues long: Methionyl-tRNA formyltransferase (308 aa).

Residue 110-113 participates in (6S)-5,6,7,8-tetrahydrofolate binding; that stretch reads SLLP.

It belongs to the Fmt family.

It catalyses the reaction L-methionyl-tRNA(fMet) + (6R)-10-formyltetrahydrofolate = N-formyl-L-methionyl-tRNA(fMet) + (6S)-5,6,7,8-tetrahydrofolate + H(+). Attaches a formyl group to the free amino group of methionyl-tRNA(fMet). The formyl group appears to play a dual role in the initiator identity of N-formylmethionyl-tRNA by promoting its recognition by IF2 and preventing the misappropriation of this tRNA by the elongation apparatus. This is Methionyl-tRNA formyltransferase from Neisseria meningitidis serogroup C / serotype 2a (strain ATCC 700532 / DSM 15464 / FAM18).